The sequence spans 248 residues: PF03932 family protein CutC (248 aa).

Belongs to the CutC family. As to quaternary structure, homodimer.

It localises to the cytoplasm. In Salmonella typhimurium (strain LT2 / SGSC1412 / ATCC 700720), this protein is PF03932 family protein CutC.